A 482-amino-acid polypeptide reads, in one-letter code: Auxin transporter-like protein 2 (482 aa).

Residues 1–58 (MVPAGDQAEEAIVADAGKEEAEVRAAMGVEQDGKFSMTSLLWHGGSVWDAWFSCASNQ) lie on the Cytoplasmic side of the membrane. Residues 59-76 (VAQVLLTLPYSFSQLGML) traverse the membrane as a helical segment. Residues 77–78 (SG) lie on the Extracellular side of the membrane. Residues 79 to 99 (LLLQVFYGLMGSWTAYLISVL) traverse the membrane as a helical segment. The Cytoplasmic portion of the chain corresponds to 100–134 (YVEYRARKEKEGVSFKNHVIQWFEVLDGLLGPYWK). The helical transmembrane segment at 135-155 (AAGLAFNCTFLLFGSVIQLIA) threads the bilayer. Residues 156-171 (CASNIYYINDRLDKRT) lie on the Extracellular side of the membrane. The helical transmembrane segment at 172–192 (WTYIFGACCSTTVFIPSFHNY) threads the bilayer. A topological domain (cytoplasmic) is located at residue R193. Residues 194 to 214 (IWSFLGLGMTTYTAWYLAIAA) form a helical membrane-spanning segment. Residues 215-231 (AVHGQVDGVTHSGPSKM) lie on the Extracellular side of the membrane. The chain crosses the membrane as a helical span at residues 232–252 (VLYFTGATNILYTFGGHAVTV). At 253 to 265 (EIMHAMWKPQKFK) the chain is on the cytoplasmic side. The chain crosses the membrane as a helical span at residues 266 to 286 (YIYLVATLYVFTLTLPSASAM). At 287–313 (YWAFGDALLTHSNAFSLLPRSGWRDAA) the chain is on the extracellular side. The helical transmembrane segment at 314-334 (VILMLIHQFITFGFACTPLYF) threads the bilayer. The Cytoplasmic portion of the chain corresponds to 335-355 (VWEKAIGMHGTRSVLTRALAR). The chain crosses the membrane as a helical span at residues 356–376 (LPIVVPIWFLAIIFPFFGPIN). Residue S377 is a topological domain, extracellular. The chain crosses the membrane as a helical span at residues 378 to 398 (AVGALLVSFTVYIIPSLSHIL). Over 399 to 423 (TYRSASARLNAAEKPPPFLPSWSGM) the chain is Cytoplasmic. The chain crosses the membrane as a helical span at residues 424 to 444 (FVVNVFVVAWVLVVGFGLGGW). At 445–482 (ASVTNFIKQIDTFGLFAKCYQCPPRAHAGAPLPAPPRH) the chain is on the extracellular side.

This sequence belongs to the amino acid/polyamine transporter 2 family. Amino acid/auxin permease (AAAP) (TC 2.A.18.1) subfamily.

It is found in the cell membrane. Functionally, carrier protein involved in proton-driven auxin influx. May mediate the formation of auxin gradient from developing leaves (site of auxin biosynthesis) to tips. The polypeptide is Auxin transporter-like protein 2 (Oryza sativa subsp. japonica (Rice)).